The following is a 427-amino-acid chain: Serine--tRNA ligase (427 aa).

L-serine is bound at residue 233-235; that stretch reads TGE. 264–266 contacts ATP; sequence RSE. An L-serine-binding site is contributed by Glu-287. 351–354 serves as a coordination point for ATP; it reads EVSS. Ser-387 contacts L-serine.

The protein belongs to the class-II aminoacyl-tRNA synthetase family. Type-1 seryl-tRNA synthetase subfamily. As to quaternary structure, homodimer. The tRNA molecule binds across the dimer.

Its subcellular location is the cytoplasm. It carries out the reaction tRNA(Ser) + L-serine + ATP = L-seryl-tRNA(Ser) + AMP + diphosphate + H(+). It catalyses the reaction tRNA(Sec) + L-serine + ATP = L-seryl-tRNA(Sec) + AMP + diphosphate + H(+). It participates in aminoacyl-tRNA biosynthesis; selenocysteinyl-tRNA(Sec) biosynthesis; L-seryl-tRNA(Sec) from L-serine and tRNA(Sec): step 1/1. Catalyzes the attachment of serine to tRNA(Ser). Is also able to aminoacylate tRNA(Sec) with serine, to form the misacylated tRNA L-seryl-tRNA(Sec), which will be further converted into selenocysteinyl-tRNA(Sec). The polypeptide is Serine--tRNA ligase (Buchnera aphidicola subsp. Acyrthosiphon pisum (strain 5A)).